The following is a 535-amino-acid chain: Lecithin-cholesterol acyltransferase-like 4 (535 aa).

An N-acetylserine modification is found at Ser-2. Ser-182 functions as the Acyl-ester intermediate in the catalytic mechanism. Residues Asp-391 and His-416 each act as charge relay system in the active site. Polar residues predominate over residues 488–505 (STVNSISVSQPGDDQNPQ). The interval 488–507 (STVNSISVSQPGDDQNPQAE) is disordered.

Belongs to the AB hydrolase superfamily. Lipase family.

This chain is Lecithin-cholesterol acyltransferase-like 4 (LCAT4), found in Arabidopsis thaliana (Mouse-ear cress).